The chain runs to 518 residues: 2-isopropylmalate synthase (518 aa).

Residues 5-268 (IIIFDTTLRD…DTRINTQEIH (264 aa)) form the Pyruvate carboxyltransferase domain. Mn(2+) contacts are provided by D14, H202, H204, and N238. A regulatory domain region spans residues 393–518 (TLDVITSQCI…DLKLHKIAGV (126 aa)).

This sequence belongs to the alpha-IPM synthase/homocitrate synthase family. LeuA type 1 subfamily. In terms of assembly, homodimer. It depends on Mn(2+) as a cofactor.

It localises to the cytoplasm. The enzyme catalyses 3-methyl-2-oxobutanoate + acetyl-CoA + H2O = (2S)-2-isopropylmalate + CoA + H(+). It functions in the pathway amino-acid biosynthesis; L-leucine biosynthesis; L-leucine from 3-methyl-2-oxobutanoate: step 1/4. In terms of biological role, catalyzes the condensation of the acetyl group of acetyl-CoA with 3-methyl-2-oxobutanoate (2-ketoisovalerate) to form 3-carboxy-3-hydroxy-4-methylpentanoate (2-isopropylmalate). This is 2-isopropylmalate synthase from Pasteurella multocida (strain Pm70).